The primary structure comprises 80 residues: RNA-binding protein Hfq (80 aa).

The Sm domain occupies 10 to 70; it reads DLFLNTVRKQ…ISTIMPGQPM (61 aa).

The protein belongs to the Hfq family. Homohexamer.

RNA chaperone that binds small regulatory RNA (sRNAs) and mRNAs to facilitate mRNA translational regulation in response to envelope stress, environmental stress and changes in metabolite concentrations. Also binds with high specificity to tRNAs. This Agrobacterium fabrum (strain C58 / ATCC 33970) (Agrobacterium tumefaciens (strain C58)) protein is RNA-binding protein Hfq.